The sequence spans 73 residues: Large ribosomal subunit protein bL28 (73 aa).

This sequence belongs to the bacterial ribosomal protein bL28 family.

This is Large ribosomal subunit protein bL28 from Fervidobacterium nodosum (strain ATCC 35602 / DSM 5306 / Rt17-B1).